Consider the following 241-residue polypeptide: Host range factor p28 (241 aa).

One can recognise a KilA-N domain in the interval 21-131; the sequence is YIDEPNDIRL…QSILRGLVNW (111 aa). An RING-type zinc finger spans residues 172–225; that stretch reads CGICYEVVYSKRLENDRYFGLLDSCNHIFCITCINIWHRTRRETGASDNCPICR.

This sequence belongs to the orthopoxvirus OPG021 family.

The protein localises to the host cytoplasm. The catalysed reaction is S-ubiquitinyl-[E2 ubiquitin-conjugating enzyme]-L-cysteine + [acceptor protein]-L-lysine = [E2 ubiquitin-conjugating enzyme]-L-cysteine + N(6)-ubiquitinyl-[acceptor protein]-L-lysine.. RING-finger E3 ubiquitin ligase which catalyzes the formation of both 'Lys-48'- and 'Lys-63'-linked polyubiquitin chains. Plays an important role in virulence by acting as an anti-apoptotic factor. The sequence is that of Host range factor p28 (OPG021) from Ectromelia virus (strain Moscow) (ECTV).